The primary structure comprises 42 residues: Kappa-actitoxin-Ael2a (42 aa).

3 cysteine pairs are disulfide-bonded: cysteine 4–cysteine 37, cysteine 6–cysteine 30, and cysteine 20–cysteine 38.

Belongs to the sea anemone type 3 (BDS) potassium channel toxin family.

The protein localises to the secreted. It localises to the nematocyst. In terms of biological role, peptide with both antimicrobial and neurotoxin activities. This toxin acts both on ERG potassium channels and sodium channels. It potently and reversibly inhibits human Kv11.1/KCNH2/ERG1 (IC(50)=34 nM), rat Kv11.1/KCNH2/ERG1 and Kv11.3/KCNH7/ERG3 voltage-gated potassium channels in a similar potency. It acts as a gating-modifier toxin that shifts the voltage-dependence of ERG activation in the positive direction and suppresses its current amplitudes elicited by strong depolarizing pulses. On sodium channels, it blocks Nav1.2/SCN2A (EC(50)=31 nM), Nav1.3/SCN3A, Nav1.4/SCN4A, Nav1.5/SCN5A, Nav1.6/SCN8A, Nav1.8/SCN10A (EC(50)=92 nM). It may act by binding at site 1 or close by, only when the pore is in an open configuration. Shows antibacterial activity against the Gram-negative bacterium S.typhimurium, but not on the bacteria B.subtilis, S.aureus, and P.aeruginosa. In vivo, this toxin does not induce neurotoxic symptoms when injected into mice. The sequence is that of Kappa-actitoxin-Ael2a from Anthopleura elegantissima (Green aggregating anemone).